Consider the following 429-residue polypeptide: UPF0597 protein BT_2080 (429 aa).

Belongs to the UPF0597 family.

The sequence is that of UPF0597 protein BT_2080 from Bacteroides thetaiotaomicron (strain ATCC 29148 / DSM 2079 / JCM 5827 / CCUG 10774 / NCTC 10582 / VPI-5482 / E50).